The primary structure comprises 1642 residues: Cholesterol transporter ABCA5 (1642 aa).

A helical transmembrane segment spans residues 32 to 52 (SVQEILFPLFFLFWLILVSMM). Residue N86 is glycosylated (N-linked (GlcNAc...) asparagine). The next 5 helical transmembrane spans lie at 220–240 (VILI…AIHI), 264–284 (LSWV…MAVI), 297–317 (IVIF…ALML), 328–348 (GVVE…IVLI), and 355–375 (LVWL…AQVM). The N-linked (GlcNAc...) asparagine glycan is linked to N388. Residues 396-416 (LIITIIMLALDSVFYVLLAVY) traverse the membrane as a helical segment. N458 is a glycosylation site (N-linked (GlcNAc...) asparagine). The ABC transporter 1 domain maps to 478–713 (IRISGIQKSY…WGIGYRLSMY (236 aa)). 514 to 521 (GHSGTGKS) serves as a coordination point for ATP. Residues 864–884 (AVLLLLLIFFAVQIFMFFLHH) form a helical membrane-spanning segment. The N-linked (GlcNAc...) asparagine glycan is linked to N919. A helical transmembrane segment spans residues 967-987 (VFSAVFNSTMVYCLPVMMNII). An N-linked (GlcNAc...) asparagine glycan is attached at N996. 6 helical membrane-spanning segments follow: residues 1021-1041 (LYFQ…YFAM), 1071-1091 (VVDI…LFAF), 1102-1122 (FLAV…FTYI), 1138-1158 (SFIY…TFFL), 1164-1184 (AVFH…GCLI), and 1207-1227 (LLVA…LLQH). In terms of domain architecture, ABC transporter 2 spans 1290-1533 (IMVCNLHKEY…FGKGYFLEIK (244 aa)). 1333 to 1340 (GPNGAGKS) contacts ATP.

Belongs to the ABC transporter superfamily. ABCA family. Post-translationally, N-glycosylated. As to expression, expressed in cardiomyocytes, oligodendrocytes and astrocytes in brain, alveolar type 2 cells in lung and follicular cells in the thyroid gland (at protein level). Detected in brain, testis, lung, heart, liver, kidney, skeletal muscle and placenta. Strongly expressed in the basal cells of the seminiferous tubules, interstitial cells consisting of Leydig cells, as well as the tunica albuginea. In the epididymis, specifically and very strongly expressed in the connective tissue outlining the cylindrical epithelium in the corpus and cauda regions, including fibrocytes and smooth muscle cells, as well as within the basal and tall columnar cells of the corpus cylindrical epithelium. Highly expressed in the brain with high expression in cortical and hippocampal neurons and moderately in the lung.

The protein resides in the golgi apparatus membrane. It localises to the lysosome membrane. Its subcellular location is the late endosome membrane. It is found in the cell membrane. The catalysed reaction is cholesterol(in) + ATP + H2O = cholesterol(out) + ADP + phosphate + H(+). Functionally, cholesterol efflux transporter in macrophages that is responsible for APOAI/high-density lipoproteins (HDL) formation at the plasma membrane under high cholesterol levels and participates in reverse cholesterol transport. May play a role in the processing of autolysosomes. The protein is Cholesterol transporter ABCA5 of Mus musculus (Mouse).